We begin with the raw amino-acid sequence, 405 residues long: Molybdopterin molybdenumtransferase 2 (405 aa).

The protein belongs to the MoeA family. It depends on Mg(2+) as a cofactor.

The enzyme catalyses adenylyl-molybdopterin + molybdate = Mo-molybdopterin + AMP + H(+). Its pathway is cofactor biosynthesis; molybdopterin biosynthesis. Catalyzes the insertion of molybdate into adenylated molybdopterin with the concomitant release of AMP. The sequence is that of Molybdopterin molybdenumtransferase 2 (moaE2) from Mycobacterium tuberculosis (strain CDC 1551 / Oshkosh).